A 290-amino-acid chain; its full sequence is S-methyl-5'-thioadenosine phosphorylase 2 (290 aa).

Residues Ser-14, 57–58, and 90–91 each bind phosphate; these read RH and SA. A substrate-binding site is contributed by Met-185. Phosphate is bound at residue Ser-186. Residue 209-211 coordinates substrate; that stretch reads DYD.

Belongs to the PNP/MTAP phosphorylase family. MTAP subfamily. In terms of assembly, homotrimer.

It localises to the cytoplasm. Its subcellular location is the nucleus. The catalysed reaction is S-methyl-5'-thioadenosine + phosphate = 5-(methylsulfanyl)-alpha-D-ribose 1-phosphate + adenine. It functions in the pathway amino-acid biosynthesis; L-methionine biosynthesis via salvage pathway; S-methyl-5-thio-alpha-D-ribose 1-phosphate from S-methyl-5'-thioadenosine (phosphorylase route): step 1/1. Its function is as follows. Catalyzes the reversible phosphorylation of S-methyl-5'-thioadenosine (MTA) to adenine and 5-methylthioribose-1-phosphate. Involved in the breakdown of MTA, a major by-product of polyamine biosynthesis. Responsible for the first step in the methionine salvage pathway after MTA has been generated from S-adenosylmethionine. Has broad substrate specificity with 6-aminopurine nucleosides as preferred substrates. The sequence is that of S-methyl-5'-thioadenosine phosphorylase 2 from Puccinia graminis f. sp. tritici (strain CRL 75-36-700-3 / race SCCL) (Black stem rust fungus).